We begin with the raw amino-acid sequence, 956 residues long: RNA-silencing factor ers1 (956 aa).

The protein localises to the cytoplasm. It is found in the cytoskeleton. The protein resides in the microtubule organizing center. Its subcellular location is the spindle pole body. Its function is as follows. Involved in RNAi-dependent heterochromatin formation and centromeric silencing. Required for the conversion of centromeric pre-small interfering RNA transcripts into small interfering RNAs, histone H3 'Lys9' methylation, and the recruitment of the RITS complex to centromeric sequences. In Schizosaccharomyces pombe (strain 972 / ATCC 24843) (Fission yeast), this protein is RNA-silencing factor ers1 (ers1).